Reading from the N-terminus, the 79-residue chain is Conotoxin Cal9.2a (79 aa).

Positions 1-23 (MNCYLILTVALLLTSAMTGTTTA) are cleaved as a signal peptide. A propeptide spanning residues 24–33 (GQLNKKGVTL) is cleaved from the precursor. Disulfide bonds link C41–C58, C46–C68, and C48–C73.

Expressed by the venom duct.

It is found in the secreted. Its function is as follows. Probable neurotoxin with unknown target. Possibly targets ion channels. The sequence is that of Conotoxin Cal9.2a from Californiconus californicus (California cone).